A 106-amino-acid chain; its full sequence is Large ribosomal subunit protein uL24 (106 aa).

This sequence belongs to the universal ribosomal protein uL24 family. Part of the 50S ribosomal subunit.

One of two assembly initiator proteins, it binds directly to the 5'-end of the 23S rRNA, where it nucleates assembly of the 50S subunit. In terms of biological role, one of the proteins that surrounds the polypeptide exit tunnel on the outside of the subunit. The chain is Large ribosomal subunit protein uL24 from Acinetobacter baylyi (strain ATCC 33305 / BD413 / ADP1).